Consider the following 235-residue polypeptide: MICOS complex subunit MIC25 (235 aa).

The N-myristoyl glycine moiety is linked to residue glycine 2. 2 positions are modified to phosphoserine: serine 13 and serine 31. 2 disordered regions span residues 31–90 (SENV…VKRY) and 106–132 (KREREAATKHSKASLPTGEGSISHEEQ). Residues 129 to 176 (HEEQKSVRLARELESREAELRRRDTFYKEQLERIERKNAEMYKLSSEQ) are a coiled coil. In terms of domain architecture, CHCH spans 194–235 (EPVCSGLQAQILHCYRDRPHEVLLCSDLVKAYQRCVSAAHKG). 2 consecutive short sequence motifs (cx9C motif) follow at residues 197–207 (CSGLQAQILHC) and 218–228 (CSDLVKAYQRC). Disulfide bonds link cysteine 197–cysteine 228 and cysteine 207–cysteine 218.

It belongs to the MICOS complex subunit Mic19 family. Metazoan Mic25 subfamily. Component of the mitochondrial contact site and cristae organizing system (MICOS) complex, composed of at least MICOS10/MIC10, CHCHD3/MIC19, CHCHD6/MIC25, APOOL/MIC27, IMMT/MIC60, APOO/MIC23/MIC26 and MICOS13/MIC13. This complex was also known under the names MINOS or MitOS complex. The MICOS complex associates with mitochondrial outer membrane proteins SAMM50, MTX1 and MTX2 (together described as components of the mitochondrial outer membrane sorting assembly machinery (SAM) complex) and DNAJC11, mitochondrial inner membrane protein TMEM11 and with HSPA9. The MICOS and SAM complexes together with DNAJC11 are part of a large protein complex spanning both membranes termed the mitochondrial intermembrane space bridging (MIB) complex. Interacts with DISC1. Interacts with DISC1. Interacts with IMMT/MIC60. In terms of assembly, (Microbial infection) Interacts with human cytomegalovirus protein UL37 isoform vMIA; this interaction rewires mitochondria by engaging the conserved MICOS complex.

It localises to the mitochondrion inner membrane. The protein localises to the mitochondrion. Its function is as follows. Component of the MICOS complex, a large protein complex of the mitochondrial inner membrane that plays crucial roles in the maintenance of crista junctions, inner membrane architecture, and formation of contact sites to the outer membrane. This is MICOS complex subunit MIC25 (CHCHD6) from Homo sapiens (Human).